A 597-amino-acid chain; its full sequence is Putative lipase ATG15 (597 aa).

Residues 1-15 (MTLEKNRHANKGTSW) lie on the Cytoplasmic side of the membrane. Residues 16-36 (TWMIYKFVVGVITVAILVLFI) form a helical; Signal-anchor for type II membrane protein membrane-spanning segment. The Lumenal portion of the chain corresponds to 37–597 (TQKSVSQAQD…DDDEDTFERK (561 aa)). Residues Asn-195, Asn-262, and Asn-346 are each glycosylated (N-linked (GlcNAc...) asparagine). Ser-364 (charge relay system) is an active-site residue. Residue Asn-481 is glycosylated (N-linked (GlcNAc...) asparagine). Residues 507-570 (EKDEPKLPNP…PTDQDPPKKC (64 aa)) form a disordered region. Residues 519-554 (SSSKSTLSTKTTSLKSSSTYSGSTSSSTVTKTTQTS) show a composition bias toward low complexity.

It belongs to the AB hydrolase superfamily. Lipase family. As to quaternary structure, binds to both phosphatidylinositol (PI) and phosphatidylinositol 3,5-bisphosphate (PIP2).

It localises to the endosome. It is found in the multivesicular body membrane. The protein localises to the prevacuolar compartment membrane. It catalyses the reaction a triacylglycerol + H2O = a diacylglycerol + a fatty acid + H(+). Lipase which is essential for lysis of subvacuolar cytoplasm to vacuole targeted bodies and intravacuolar autophagic bodies. Involved in the lysis of intravacuolar multivesicular body (MVB) vesicles. The intravacuolar membrane disintegration by ATG15 is critical to life span extension. In Candida albicans (strain SC5314 / ATCC MYA-2876) (Yeast), this protein is Putative lipase ATG15 (ATG15).